The primary structure comprises 584 residues: A-type ATP synthase subunit A (584 aa).

234–241 (GPFGSGKT) contributes to the ATP binding site.

It belongs to the ATPase alpha/beta chains family. As to quaternary structure, has multiple subunits with at least A(3), B(3), C, D, E, F, H, I and proteolipid K(x).

The protein resides in the cell membrane. The catalysed reaction is ATP + H2O + 4 H(+)(in) = ADP + phosphate + 5 H(+)(out). Functionally, component of the A-type ATP synthase that produces ATP from ADP in the presence of a proton gradient across the membrane. The A chain is the catalytic subunit. This chain is A-type ATP synthase subunit A, found in Methanoculleus marisnigri (strain ATCC 35101 / DSM 1498 / JR1).